The sequence spans 240 residues: Small ribosomal subunit protein uS2 (240 aa).

It belongs to the universal ribosomal protein uS2 family.

In Wigglesworthia glossinidia brevipalpis, this protein is Small ribosomal subunit protein uS2.